We begin with the raw amino-acid sequence, 501 residues long: Probable sucrose utilization protein SUC1 (501 aa).

Positions 13-39 (CDSCSFRKVKCDMKTPCSRCVLNNLKC) form a DNA-binding region, zn(2)-C6 fungal-type.

Belongs to the MAL13 family.

The protein localises to the nucleus. Functionally, affects sucrose utilization and alpha-glucosidase activity. Probable transcriptional activator. The chain is Probable sucrose utilization protein SUC1 (SUC1) from Candida albicans (strain SC5314 / ATCC MYA-2876) (Yeast).